A 421-amino-acid chain; its full sequence is Serine--tRNA ligase (421 aa).

230–232 provides a ligand contact to L-serine; the sequence is TAE. Position 259–261 (259–261) interacts with ATP; it reads RRE. E282 provides a ligand contact to L-serine. An ATP-binding site is contributed by 346–349; that stretch reads EISS. S380 lines the L-serine pocket.

Belongs to the class-II aminoacyl-tRNA synthetase family. Type-1 seryl-tRNA synthetase subfamily. As to quaternary structure, homodimer. The tRNA molecule binds across the dimer.

Its subcellular location is the cytoplasm. It catalyses the reaction tRNA(Ser) + L-serine + ATP = L-seryl-tRNA(Ser) + AMP + diphosphate + H(+). The catalysed reaction is tRNA(Sec) + L-serine + ATP = L-seryl-tRNA(Sec) + AMP + diphosphate + H(+). The protein operates within aminoacyl-tRNA biosynthesis; selenocysteinyl-tRNA(Sec) biosynthesis; L-seryl-tRNA(Sec) from L-serine and tRNA(Sec): step 1/1. In terms of biological role, catalyzes the attachment of serine to tRNA(Ser). Is also able to aminoacylate tRNA(Sec) with serine, to form the misacylated tRNA L-seryl-tRNA(Sec), which will be further converted into selenocysteinyl-tRNA(Sec). The polypeptide is Serine--tRNA ligase (Methanosarcina acetivorans (strain ATCC 35395 / DSM 2834 / JCM 12185 / C2A)).